Reading from the N-terminus, the 220-residue chain is MLSVILKSSVRGLGKAGEIAKVRPGYARYLLADGKAVRATKDNVALLEQKLALIEEENSKKLAEAEGVAKSLGAERLIIVRQSSDDGKLFGSVTVRDVSKLLCDLGYDIQPRCVSFSEVIKRTGEYEINVELHADLVAALQLHVVRNESEAERVRLGIAKSEDQAAAAAEVEQAEDVAAAEQQDSSPVDDHADDADGATGGEGRDEGAGDASDGEEMPST.

The segment covering 167-184 (AAAEVEQAEDVAAAEQQD) has biased composition (low complexity). A disordered region spans residues 167–220 (AAAEVEQAEDVAAAEQQDSSPVDDHADDADGATGGEGRDEGAGDASDGEEMPST).

This sequence belongs to the bacterial ribosomal protein bL9 family.

Its function is as follows. Binds to the 23S rRNA. This is Large ribosomal subunit protein bL9 from Anaplasma marginale (strain St. Maries).